Reading from the N-terminus, the 453-residue chain is MINNLSVSMTKVLKIILTIIIILFNTLSILANTTTLSSIKITKGNCTQIPIAINFFSAKSNEEHDLSQNIVSIISNDLNISKIFAPISSDLFIETEQGVAHIPLFTAWSQINANILINGEITKIDSTDFKVTFVIWDVFSAKEITRKSFTFPSQLWRSTAHKIADQIYKHVTGSKGNFNTKIVYVSESNSSNRKIRRIAIMDQDGANHNYITNGKNHVITPVFSPKNNQILYVSYHNKIPTVRIHDLNSGNNKILASFNGITFSPRFSPDGNKILVSNSSTKNVTHIYEINLLTGKIKQLTKGQSINTSPSYSPDGSKIAFVSDRSGSTQIYIMNDQGGNIKRLTSQPGAYTTPAWSPTNNYIAFTKIEAGEFSIGVIKLDGSNKRIIATKYLVEGPSWAPDGKTIIFSRAYKATKSTSTKVKLYSVDYTGYNEREIQTPENASDPNWSNEYE.

A signal peptide spans 1–31 (MINNLSVSMTKVLKIILTIIIILFNTLSILA).

This sequence belongs to the TolB family. In terms of assembly, the Tol-Pal system is composed of five core proteins: the inner membrane proteins TolA, TolQ and TolR, the periplasmic protein TolB and the outer membrane protein Pal. They form a network linking the inner and outer membranes and the peptidoglycan layer.

It is found in the periplasm. Part of the Tol-Pal system, which plays a role in outer membrane invagination during cell division and is important for maintaining outer membrane integrity. The protein is Tol-Pal system protein TolB of Orientia tsutsugamushi (strain Boryong) (Rickettsia tsutsugamushi).